The sequence spans 61 residues: Alpha-conotoxin-like PnMGMR-02 (61 aa).

The signal sequence occupies residues 1-21 (MGMRMMFTVFLLVVLATTVVS). Positions 22-44 (FTSDRASDGGNAAASDLIALTIK) are excised as a propeptide. 2 cysteine pairs are disulfide-bonded: Cys46–Cys52 and Cys47–Cys60. Positions 48–50 (SRP) are ser-Xaa-Pro motif, crucial for potent interaction with nAChR. The residue at position 60 (Cys60) is a Cysteine amide.

It belongs to the conotoxin A superfamily. As to expression, expressed by the venom duct.

It localises to the secreted. Alpha-conotoxins act on postsynaptic membranes, they bind to the nicotinic acetylcholine receptors (nAChR) and thus inhibit them. This toxin blocks mammalian nAChRs (alpha-7 &gt; alpha-3/beta-2). The protein is Alpha-conotoxin-like PnMGMR-02 of Conus pennaceus (Feathered cone).